We begin with the raw amino-acid sequence, 635 residues long: 1-deoxy-D-xylulose-5-phosphate synthase (635 aa).

Thiamine diphosphate contacts are provided by residues H79 and 120–122; that span reads GHS. Position 151 (D151) interacts with Mg(2+). Thiamine diphosphate is bound by residues 152-153, N182, Y291, and E372; that span reads GA. A Mg(2+)-binding site is contributed by N182.

Belongs to the transketolase family. DXPS subfamily. As to quaternary structure, homodimer. It depends on Mg(2+) as a cofactor. The cofactor is thiamine diphosphate.

The catalysed reaction is D-glyceraldehyde 3-phosphate + pyruvate + H(+) = 1-deoxy-D-xylulose 5-phosphate + CO2. It functions in the pathway metabolic intermediate biosynthesis; 1-deoxy-D-xylulose 5-phosphate biosynthesis; 1-deoxy-D-xylulose 5-phosphate from D-glyceraldehyde 3-phosphate and pyruvate: step 1/1. In terms of biological role, catalyzes the acyloin condensation reaction between C atoms 2 and 3 of pyruvate and glyceraldehyde 3-phosphate to yield 1-deoxy-D-xylulose-5-phosphate (DXP). This chain is 1-deoxy-D-xylulose-5-phosphate synthase, found in Xylella fastidiosa (strain M12).